We begin with the raw amino-acid sequence, 215 residues long: Probable phosphoglycerate mutase GpmB (215 aa).

Substrate contacts are provided by residues R8–N15, Q21–G22, R58, K60, E82–M85, R104–R105, and G151–I152. The active-site Tele-phosphohistidine intermediate is H9. The active-site Proton donor/acceptor is the E82.

The protein belongs to the phosphoglycerate mutase family. GpmB subfamily.

The enzyme catalyses (2R)-2-phosphoglycerate = (2R)-3-phosphoglycerate. It functions in the pathway carbohydrate degradation; glycolysis; pyruvate from D-glyceraldehyde 3-phosphate: step 3/5. This is Probable phosphoglycerate mutase GpmB from Salmonella paratyphi C (strain RKS4594).